A 287-amino-acid chain; its full sequence is Festuclavine synthase II (287 aa).

It belongs to the fgaFS/easG family.

The enzyme catalyses festuclavine + NAD(+) = 6,8-dimethyl-6,7-didehydroergoline + NADH + H(+). It functions in the pathway alkaloid biosynthesis; ergot alkaloid biosynthesis. Festuclavine synthase; part of the gene cluster that mediates the biosynthesis of isofumigaclavines, fungal ergot alkaloids. The tryptophan dimethylallyltransferase ifgA catalyzes the first step of ergot alkaloid biosynthesis by condensing dimethylallyl diphosphate (DMAP) and tryptophan to form 4-dimethylallyl-L-tryptophan. The second step is catalyzed by the methyltransferase ifgB that methylates 4-dimethylallyl-L-tryptophan in the presence of S-adenosyl-L-methionine, resulting in the formation of N-methyl-dimethylallyl-L-tryptophan. The catalase ifgD and the FAD-dependent oxidoreductase ifgC then transform N-methyl-dimethylallyl-L-tryptophan to chanoclavine-I which is further oxidized by ifgE in the presence of NAD(+), resulting in the formation of chanoclavine-I aldehyde. The chanoclavine-I aldehyde reductases ifgG and/or fgaOx3 reduce chanoclavine-I aldehyde to dihydrochanoclavine-I aldehyde that spontaneously dehydrates to form 6,8-dimethyl-6,7-didehydroergoline. The festuclavine dehydrogenases ifgF1 and/or ifgF2 then catalyze the reduction of 6,8-dimethyl-6,7-didehydroergoline to form festuclavine. Hydrolysis of festuclavine by a yet undetermined cytochrome P450 monooxygenase (called ifgH) then leads to the formation of isofumigaclavine B which is in turn acetylated by ifgI to isofumigaclavine A. Penicillium roqueforti has interestingly at least two sets of genes for the consumption of chanoclavine-I aldehyde on three different loci, the OYEs ifgG/fgaOx3 and the festuclavine synthase homologs ifgF1/ifgF2. The reason for the duplication of these genes is unclear, probably to ensure the conversion of chanoclavine-I aldehyde by differential gene expression under various environmental conditions. This chain is Festuclavine synthase II, found in Penicillium roqueforti (strain FM164).